The primary structure comprises 461 residues: Kynureninase (461 aa).

Residues Leu114, Thr115, 142–145 (FPSD), Asp228, His231, and Tyr253 each bind pyridoxal 5'-phosphate. N6-(pyridoxal phosphate)lysine is present on Lys254. Positions 288 and 316 each coordinate pyridoxal 5'-phosphate.

Belongs to the kynureninase family. In terms of assembly, homodimer. Pyridoxal 5'-phosphate is required as a cofactor.

The protein localises to the cytoplasm. It carries out the reaction L-kynurenine + H2O = anthranilate + L-alanine + H(+). The enzyme catalyses 3-hydroxy-L-kynurenine + H2O = 3-hydroxyanthranilate + L-alanine + H(+). Its pathway is amino-acid degradation; L-kynurenine degradation; L-alanine and anthranilate from L-kynurenine: step 1/1. The protein operates within cofactor biosynthesis; NAD(+) biosynthesis; quinolinate from L-kynurenine: step 2/3. Catalyzes the cleavage of L-kynurenine (L-Kyn) and L-3-hydroxykynurenine (L-3OHKyn) into anthranilic acid (AA) and 3-hydroxyanthranilic acid (3-OHAA), respectively. The polypeptide is Kynureninase (Candida albicans (strain SC5314 / ATCC MYA-2876) (Yeast)).